The sequence spans 129 residues: Regulator of ribonuclease activity B (129 aa).

This sequence belongs to the RraB family. Interacts with the C-terminal region of Rne.

The protein localises to the cytoplasm. Its function is as follows. Globally modulates RNA abundance by binding to RNase E (Rne) and regulating its endonucleolytic activity. Can modulate Rne action in a substrate-dependent manner by altering the composition of the degradosome. This is Regulator of ribonuclease activity B from Shewanella denitrificans (strain OS217 / ATCC BAA-1090 / DSM 15013).